Reading from the N-terminus, the 309-residue chain is D-alanine--D-alanine ligase (309 aa).

The 196-residue stretch at 109–304 folds into the ATP-grasp domain; the sequence is KMVWAACGLP…FTALCLAILE (196 aa). 135–190 serves as a coordination point for ATP; sequence VAELGLPIFVKPVHEGSSMGATKVTAASQLKAAWERAARFDDLVLAEEFIVGAELT. Mg(2+)-binding residues include Asp-258, Glu-271, and Asn-273.

The protein belongs to the D-alanine--D-alanine ligase family. It depends on Mg(2+) as a cofactor. Mn(2+) is required as a cofactor.

The protein localises to the cytoplasm. The catalysed reaction is 2 D-alanine + ATP = D-alanyl-D-alanine + ADP + phosphate + H(+). It participates in cell wall biogenesis; peptidoglycan biosynthesis. In terms of biological role, cell wall formation. This Aromatoleum aromaticum (strain DSM 19018 / LMG 30748 / EbN1) (Azoarcus sp. (strain EbN1)) protein is D-alanine--D-alanine ligase.